The following is a 180-amino-acid chain: MFPMLTGFISYGQQTIRAARYIGQSFIITLSHTNRLPITIHYPYEKSITSERFRGRIHFEFDKCIACEVCVRVCPIDLPLVDWRFEKDIKRKQLLNYSIDFGVCIFCGNCVEYCPTNCLSMTEEYELSTYDRHELNYNQIALSRLPISIMGDYTIQTIRNSPQSKIDEEKSWNSRTITDY.

2 consecutive 4Fe-4S ferredoxin-type domains span residues 55 to 84 and 95 to 124; these read GRIH…VDWR and LNYS…MTEE. [4Fe-4S] cluster-binding residues include Cys-64, Cys-67, Cys-70, Cys-74, Cys-104, Cys-107, Cys-110, and Cys-114.

The protein belongs to the complex I 23 kDa subunit family. In terms of assembly, NDH is composed of at least 16 different subunits, 5 of which are encoded in the nucleus. [4Fe-4S] cluster serves as cofactor.

Its subcellular location is the plastid. It is found in the chloroplast thylakoid membrane. The catalysed reaction is a plastoquinone + NADH + (n+1) H(+)(in) = a plastoquinol + NAD(+) + n H(+)(out). It catalyses the reaction a plastoquinone + NADPH + (n+1) H(+)(in) = a plastoquinol + NADP(+) + n H(+)(out). Its function is as follows. NDH shuttles electrons from NAD(P)H:plastoquinone, via FMN and iron-sulfur (Fe-S) centers, to quinones in the photosynthetic chain and possibly in a chloroplast respiratory chain. The immediate electron acceptor for the enzyme in this species is believed to be plastoquinone. Couples the redox reaction to proton translocation, and thus conserves the redox energy in a proton gradient. This is NAD(P)H-quinone oxidoreductase subunit I, chloroplastic from Zea mays (Maize).